The sequence spans 172 residues: Bifunctional protein PyrR (172 aa).

Residues 36–37, arginine 77, 94–102, and valine 151 contribute to the substrate site; these read TG and DDVLMSGRT. The short motif at 90-102 is the PRPP-binding element; that stretch reads LVLVDDVLMSGRT.

This sequence belongs to the purine/pyrimidine phosphoribosyltransferase family. PyrR subfamily.

The catalysed reaction is UMP + diphosphate = 5-phospho-alpha-D-ribose 1-diphosphate + uracil. Its function is as follows. Regulates the transcription of the pyrimidine nucleotide (pyr) operon in response to exogenous pyrimidines. In terms of biological role, also displays a weak uracil phosphoribosyltransferase activity which is not physiologically significant. The protein is Bifunctional protein PyrR of Pseudomonas putida (Arthrobacter siderocapsulatus).